Reading from the N-terminus, the 176-residue chain is HTH-type transcriptional regulator DctR (176 aa).

The HTH luxR-type domain maps to 109 to 174; the sequence is VPEAAVSLSR…ELVRHQHIDY (66 aa). The H-T-H motif DNA-binding region spans 133–152; sequence TEDILEKLKISLKTFYCHKH.

Functionally, may act as a transcriptional regulator of dctA. The chain is HTH-type transcriptional regulator DctR (dctR) from Escherichia coli (strain K12).